A 242-amino-acid polypeptide reads, in one-letter code: MLCCMRRTKQVEKNDEDQKIEQDGIKPEDKAHKAATKIQASFRGHITRKKLKGEKKGDAQAAEAEGNEKDEAPVADGVEKKEGEGPTPTDGAPASGPKAEETGKAGETPSEEKKGEGTPDAATEQAAPQAPVPSEEKAGSAETESATKASTDNSPSSKAEDAPAKEEPKQADVPAAVTAAAAATTPAAEDAAAKATAQPPTDAVESSQAEEKIEAVDETKPKESARQDEGKGEEREADQEHA.

The interval 1–242 is disordered; sequence MLCCMRRTKQ…EEREADQEHA (242 aa). Residues C3 and C4 are each lipidated (S-palmitoyl cysteine). Over residues 9-32 the composition is skewed to basic and acidic residues; the sequence is KQVEKNDEDQKIEQDGIKPEDKAH. In terms of domain architecture, IQ spans 31–60; sequence AHKAATKIQASFRGHITRKKLKGEKKGDAQ. S41 carries the phosphoserine; by PHK and PKC modification. 2 stretches are compositionally biased toward basic and acidic residues: residues 66–84 and 98–117; these read GNEK…KEGE and KAEE…KGEG. Positions 142 to 157 are enriched in polar residues; sequence ETESATKASTDNSPSS. Phosphoserine is present on residues S154, S156, and S157. Over residues 158–170 the composition is skewed to basic and acidic residues; the sequence is KAEDAPAKEEPKQ. Residues 171 to 203 show a composition bias toward low complexity; that stretch reads ADVPAAVTAAAAATTPAAEDAAAKATAQPPTDA. T185 is modified (phosphothreonine). Residues S206 and S207 each carry the phosphoserine; by CK2 modification. Residues 209–242 show a composition bias toward basic and acidic residues; that stretch reads AEEKIEAVDETKPKESARQDEGKGEEREADQEHA.

The protein belongs to the neuromodulin family. As to quaternary structure, identified in a complex containing FGFR4, NCAM1, CDH2, PLCG1, FRS2, SRC, SHC1, GAP43 and CTTN. Interacts (via IQ domain) with calmodulin. Binds calmodulin with a greater affinity in the absence of Ca(2+) than in its presence. In terms of processing, phosphorylated. Phosphorylation of this protein by a protein kinase C is specifically correlated with certain forms of synaptic plasticity. Post-translationally, palmitoylated by ZDHHC3. Palmitoylation is regulated by ARF6 and is essential for plasma membrane association and axonal and dendritic filopodia induction. Deacylated by LYPLA2.

Its subcellular location is the cell membrane. The protein localises to the cell projection. It is found in the growth cone membrane. It localises to the synapse. The protein resides in the filopodium membrane. Its subcellular location is the perikaryon. The protein localises to the dendrite. It is found in the axon. It localises to the cytoplasm. This protein is associated with nerve growth. It is a major component of the motile 'growth cones' that form the tips of elongating axons. Plays a role in axonal and dendritic filopodia induction. The polypeptide is Neuromodulin (GAP43) (Felis catus (Cat)).